Here is an 83-residue protein sequence, read N- to C-terminus: Mu-conotoxin-like PnMKLT1-014 (83 aa).

A signal peptide spans 1-22 (MNLTCMMIVAVLFLTAWTFVMA). Positions 23–50 (DDSNNGLANLFSKSRYEMEDPEPSKLEK) are excised as a propeptide. 3 cysteine pairs are disulfide-bonded: Cys54–Cys72, Cys61–Cys77, and Cys71–Cys82.

This sequence belongs to the conotoxin O1 superfamily. In terms of tissue distribution, expressed by the venom duct.

The protein resides in the secreted. Functionally, mu-conotoxins block voltage-gated sodium channels (Nav). This Conus pennaceus (Feathered cone) protein is Mu-conotoxin-like PnMKLT1-014.